A 180-amino-acid polypeptide reads, in one-letter code: Der GTPase-activating protein YihI (180 aa).

Disordered stretches follow at residues 1-87 (MSRK…MTKQ) and 142-180 (GLLE…DYKG). A compositionally biased stretch (basic and acidic residues) spans 23-32 (NRTESDVEGR). Over residues 33–43 (LRKRAKKRKGL) the composition is skewed to basic residues. Positions 51-68 (EVNEQKKQSSEQNRDPRL) are enriched in basic and acidic residues. Over residues 165–180 (DLLADFDDINFDDYKG) the composition is skewed to acidic residues.

This sequence belongs to the YihI family. As to quaternary structure, interacts with Der.

In terms of biological role, a GTPase-activating protein (GAP) that modifies Der/EngA GTPase function. May play a role in ribosome biogenesis. The protein is Der GTPase-activating protein YihI of Vibrio parahaemolyticus serotype O3:K6 (strain RIMD 2210633).